Consider the following 100-residue polypeptide: Urease subunit gamma (100 aa).

Belongs to the urease gamma subunit family. As to quaternary structure, heterotrimer of UreA (gamma), UreB (beta) and UreC (alpha) subunits. Three heterotrimers associate to form the active enzyme.

The protein resides in the cytoplasm. It catalyses the reaction urea + 2 H2O + H(+) = hydrogencarbonate + 2 NH4(+). It functions in the pathway nitrogen metabolism; urea degradation; CO(2) and NH(3) from urea (urease route): step 1/1. The chain is Urease subunit gamma from Cupriavidus taiwanensis (strain DSM 17343 / BCRC 17206 / CCUG 44338 / CIP 107171 / LMG 19424 / R1) (Ralstonia taiwanensis (strain LMG 19424)).